Reading from the N-terminus, the 436-residue chain is Glutamate-1-semialdehyde 2,1-aminomutase (436 aa).

Lysine 276 carries the N6-(pyridoxal phosphate)lysine modification.

It belongs to the class-III pyridoxal-phosphate-dependent aminotransferase family. HemL subfamily. As to quaternary structure, homodimer. Pyridoxal 5'-phosphate is required as a cofactor.

Its subcellular location is the cytoplasm. The catalysed reaction is (S)-4-amino-5-oxopentanoate = 5-aminolevulinate. It participates in porphyrin-containing compound metabolism; protoporphyrin-IX biosynthesis; 5-aminolevulinate from L-glutamyl-tRNA(Glu): step 2/2. The protein operates within porphyrin-containing compound metabolism; chlorophyll biosynthesis. The sequence is that of Glutamate-1-semialdehyde 2,1-aminomutase from Synechococcus sp. (strain JA-2-3B'a(2-13)) (Cyanobacteria bacterium Yellowstone B-Prime).